The following is a 644-amino-acid chain: 1-deoxy-D-xylulose-5-phosphate synthase (644 aa).

Thiamine diphosphate-binding positions include H78 and 120-122; that span reads GHA. Residue D150 participates in Mg(2+) binding. Thiamine diphosphate is bound by residues 151 to 152, N179, and E374; that span reads AA. N179 serves as a coordination point for Mg(2+).

Belongs to the transketolase family. DXPS subfamily. As to quaternary structure, homodimer. Requires Mg(2+) as cofactor. It depends on thiamine diphosphate as a cofactor.

The enzyme catalyses D-glyceraldehyde 3-phosphate + pyruvate + H(+) = 1-deoxy-D-xylulose 5-phosphate + CO2. It participates in metabolic intermediate biosynthesis; 1-deoxy-D-xylulose 5-phosphate biosynthesis; 1-deoxy-D-xylulose 5-phosphate from D-glyceraldehyde 3-phosphate and pyruvate: step 1/1. Catalyzes the acyloin condensation reaction between C atoms 2 and 3 of pyruvate and glyceraldehyde 3-phosphate to yield 1-deoxy-D-xylulose-5-phosphate (DXP). The protein is 1-deoxy-D-xylulose-5-phosphate synthase of Chlamydia pneumoniae (Chlamydophila pneumoniae).